Here is a 223-residue protein sequence, read N- to C-terminus: Cytidylate kinase (223 aa).

Gly-10–Thr-18 lines the ATP pocket.

The protein belongs to the cytidylate kinase family. Type 1 subfamily.

The protein resides in the cytoplasm. It carries out the reaction CMP + ATP = CDP + ADP. The enzyme catalyses dCMP + ATP = dCDP + ADP. The chain is Cytidylate kinase from Exiguobacterium sibiricum (strain DSM 17290 / CCUG 55495 / CIP 109462 / JCM 13490 / 255-15).